The chain runs to 349 residues: DNA integrity scanning protein DisA (349 aa).

The DAC domain maps to 3–143 (KQDLMDIIVK…LKYRLKNFDE (141 aa)). ATP-binding positions include glycine 70, valine 88, and 101–105 (TRHRT).

Belongs to the DisA family. In terms of assembly, homooctamer. Mg(2+) is required as a cofactor.

It catalyses the reaction 2 ATP = 3',3'-c-di-AMP + 2 diphosphate. Functionally, participates in a DNA-damage check-point. DisA forms globular foci that rapidly scan along the chromosomes searching for lesions. In terms of biological role, also has diadenylate cyclase activity, catalyzing the condensation of 2 ATP molecules into cyclic di-AMP (c-di-AMP). c-di-AMP likely acts as a signaling molecule that may couple DNA integrity with a cellular process. This is DNA integrity scanning protein DisA from Fusobacterium nucleatum subsp. nucleatum (strain ATCC 25586 / DSM 15643 / BCRC 10681 / CIP 101130 / JCM 8532 / KCTC 2640 / LMG 13131 / VPI 4355).